Reading from the N-terminus, the 276-residue chain is Hydroxycinnamoyl-CoA hydratase-lyase (276 aa).

Residues K29, A68, M70, and L72 each contribute to the acetyl-CoA site. Y75 provides a ligand contact to vanillin. Positions 120, 142, and 146 each coordinate acetyl-CoA. Vanillin contacts are provided by G151 and Y239.

This sequence belongs to the enoyl-CoA hydratase/isomerase family. Homohexamer; dimer of trimers.

It catalyses the reaction (E)-feruloyl-CoA + H2O = vanillin + acetyl-CoA. The enzyme catalyses (E)-caffeoyl-CoA + H2O = 3,4-dihydroxybenzaldehyde + acetyl-CoA. The catalysed reaction is (E)-4-coumaroyl-CoA + H2O = 4-hydroxybenzaldehyde + acetyl-CoA. It carries out the reaction (E)-feruloyl-CoA + H2O = 3-hydroxy-3-(4-hydroxy-3-methoxyphenyl)propanoyl-CoA. It catalyses the reaction 3-hydroxy-3-(4-hydroxy-3-methoxyphenyl)propanoyl-CoA = vanillin + acetyl-CoA. The enzyme catalyses (E)-caffeoyl-CoA + H2O = 3-hydroxy-3-(3,4-dihydroxyphenyl)propanoyl-CoA. The catalysed reaction is 3-hydroxy-3-(3,4-dihydroxyphenyl)propanoyl-CoA = 3,4-dihydroxybenzaldehyde + acetyl-CoA. It carries out the reaction (E)-4-coumaroyl-CoA + H2O = 3-hydroxy-3-(4-hydroxyphenyl)propanoyl-CoA. It catalyses the reaction 3-hydroxy-3-(4-hydroxyphenyl)propanoyl-CoA = 4-hydroxybenzaldehyde + acetyl-CoA. Its function is as follows. Catalyzes the hydration of the acyl-CoA thioester of ferulic acid and the subsequent retro-aldol cleavage of the hydrated intermediate to yield vanillin (4-hydroxy-3-methoxy-benzaldehyde). The enzyme is also active with caffeoyl-CoA and 4-coumaroyl-CoA producing 3,4-dihydroxybenzaldehyde and 4-hydroxybenzaldehyde, respectively. This Pseudomonas fluorescens protein is Hydroxycinnamoyl-CoA hydratase-lyase.